Reading from the N-terminus, the 395-residue chain is THAP domain-containing protein 5 (395 aa).

The THAP-type zinc finger occupies 1–84 (MPRYCAAICC…LKQTAVPTIF (84 aa)). The disordered stretch occupies residues 85–112 (SLPEDNQGKDPSKKKSQKKNLEDEKEVC). Over residues 90 to 112 (NQGKDPSKKKSQKKNLEDEKEVC) the composition is skewed to basic and acidic residues. The HCFC1-binding motif (HBM) signature appears at 321-324 (EHSY). The stretch at 348-382 (LELKEQQTLGRLKSLEALIRQLKQENWLSEENVKI) forms a coiled coil.

As to quaternary structure, interacts with HTRA2; under apoptotic conditions. Interacts with ABRAXAS2. In terms of processing, cleaved by HTRA2 during apoptosis. In terms of tissue distribution, detected in heart. Detected in brain and muscle (at protein level). Highly expressed in the heart. Also found in brain and skeletal muscle.

The protein resides in the nucleus. In terms of biological role, has sequence-specific DNA-binding activity and can function as transcriptional repressor (in vitro). May be a regulator of cell cycle: THAP5 overexpression in human cell lines causes cell cycle arrest at G2/M phase. In Homo sapiens (Human), this protein is THAP domain-containing protein 5 (THAP5).